The sequence spans 219 residues: 7-cyano-7-deazaguanine synthase (219 aa).

10–20 (FSGGQDSTTCL) serves as a coordination point for ATP. Residues Cys188, Cys196, Cys199, and Cys202 each contribute to the Zn(2+) site.

Belongs to the QueC family. Zn(2+) is required as a cofactor.

It carries out the reaction 7-carboxy-7-deazaguanine + NH4(+) + ATP = 7-cyano-7-deazaguanine + ADP + phosphate + H2O + H(+). It participates in purine metabolism; 7-cyano-7-deazaguanine biosynthesis. Catalyzes the ATP-dependent conversion of 7-carboxy-7-deazaguanine (CDG) to 7-cyano-7-deazaguanine (preQ(0)). The protein is 7-cyano-7-deazaguanine synthase of Neisseria meningitidis serogroup A / serotype 4A (strain DSM 15465 / Z2491).